Reading from the N-terminus, the 185-residue chain is A-type ATP synthase subunit E (185 aa).

The protein belongs to the V-ATPase E subunit family. As to quaternary structure, has multiple subunits with at least A(3), B(3), C, D, E, F, H, I and proteolipid K(x).

Its subcellular location is the cell membrane. Its function is as follows. Component of the A-type ATP synthase that produces ATP from ADP in the presence of a proton gradient across the membrane. The protein is A-type ATP synthase subunit E of Thermoplasma volcanium (strain ATCC 51530 / DSM 4299 / JCM 9571 / NBRC 15438 / GSS1).